Reading from the N-terminus, the 180-residue chain is ATP synthase subunit delta (180 aa).

It belongs to the ATPase delta chain family. As to quaternary structure, F-type ATPases have 2 components, F(1) - the catalytic core - and F(0) - the membrane proton channel. F(1) has five subunits: alpha(3), beta(3), gamma(1), delta(1), epsilon(1). F(0) has three main subunits: a(1), b(2) and c(10-14). The alpha and beta chains form an alternating ring which encloses part of the gamma chain. F(1) is attached to F(0) by a central stalk formed by the gamma and epsilon chains, while a peripheral stalk is formed by the delta and b chains.

It is found in the cell membrane. Its function is as follows. F(1)F(0) ATP synthase produces ATP from ADP in the presence of a proton or sodium gradient. F-type ATPases consist of two structural domains, F(1) containing the extramembraneous catalytic core and F(0) containing the membrane proton channel, linked together by a central stalk and a peripheral stalk. During catalysis, ATP synthesis in the catalytic domain of F(1) is coupled via a rotary mechanism of the central stalk subunits to proton translocation. In terms of biological role, this protein is part of the stalk that links CF(0) to CF(1). It either transmits conformational changes from CF(0) to CF(1) or is implicated in proton conduction. This Bacillus cereus (strain B4264) protein is ATP synthase subunit delta.